Consider the following 288-residue polypeptide: 4-hydroxybenzoate octaprenyltransferase (288 aa).

6 helical membrane passes run 20–40 (IGTL…AGGL), 43–63 (LKVF…GCII), 96–116 (LFVV…PLVV), 210–230 (QIIG…GMVA), 234–254 (AIYA…QKLI), and 262–282 (CFTA…ALML).

The protein belongs to the UbiA prenyltransferase family. Requires Mg(2+) as cofactor.

It localises to the cell inner membrane. The enzyme catalyses all-trans-octaprenyl diphosphate + 4-hydroxybenzoate = 4-hydroxy-3-(all-trans-octaprenyl)benzoate + diphosphate. The protein operates within cofactor biosynthesis; ubiquinone biosynthesis. In terms of biological role, catalyzes the prenylation of para-hydroxybenzoate (PHB) with an all-trans polyprenyl group. Mediates the second step in the final reaction sequence of ubiquinone-8 (UQ-8) biosynthesis, which is the condensation of the polyisoprenoid side chain with PHB, generating the first membrane-bound Q intermediate 3-octaprenyl-4-hydroxybenzoate. This is 4-hydroxybenzoate octaprenyltransferase from Shewanella pealeana (strain ATCC 700345 / ANG-SQ1).